Consider the following 241-residue polypeptide: Microneme antigen (241 aa).

The first 34 residues, M1–S34, serve as a signal peptide directing secretion. A propeptide spanning residues A35–H103 is cleaved from the precursor. Basic and acidic residues predominate over residues H61–K83. The interval H61–H92 is disordered. 2 consecutive PAN domains span residues C112 to C181 and C185 to S241. 6 disulfide bridges follow: C112–C181, C137–C159, C141–C147, C185–C189, C210–C230, and C214–C220. S121 serves as a coordination point for a carbohydrate. Residues K162, Y169, and D174 each contribute to the a carbohydrate site.

It belongs to the microneme antigen family. In terms of assembly, homodimer or heterodimer of major microneme antigen and microneme antigen. Contains six disulfide bonds.

The protein resides in the cytoplasmic vesicle. It is found in the secretory vesicle. Its subcellular location is the microneme. In terms of biological role, galactose-binding lectin. Plays a role in adhesion to the host cell. Has a potential role in invasion of host cells. This Sarcocystis muris protein is Microneme antigen.